The primary structure comprises 506 residues: Maturase K (506 aa).

This sequence belongs to the intron maturase 2 family. MatK subfamily.

Its subcellular location is the plastid. It localises to the chloroplast. In terms of biological role, usually encoded in the trnK tRNA gene intron. Probably assists in splicing its own and other chloroplast group II introns. The polypeptide is Maturase K (Medicago sativa (Alfalfa)).